The chain runs to 72 residues: Putative sodium channel toxin Ts18 (72 aa).

A signal peptide spans 1–21; it reads MNFRFPFLLMITISLIGAVLT. 3 disulfides stabilise this stretch: C38-C61, C47-C66, and C51-C68.

Belongs to the long (3 C-C) scorpion toxin superfamily. As to expression, expressed by the venom gland.

It localises to the secreted. Binds to sodium channels (Nav) and affects the channel activation process. This is Putative sodium channel toxin Ts18 from Tityus serrulatus (Brazilian scorpion).